The sequence spans 472 residues: Transmembrane protein 8B (472 aa).

The tract at residues 1 to 36 (MNMPQSLGNQPLPPEPPSLGTPAEGPGTTSPPEHCW) is disordered. Over 1–233 (MNMPQSLGNQ…ADALTYGFQL (233 aa)) the chain is Extracellular. N-linked (GlcNAc...) asparagine glycans are attached at residues Asn-92 and Asn-100. Residues 182 to 221 (FLSPCVDDCGPYGQCKLLRTHNYLYAACECKAGWRGWGCT) form the EGF-like domain. 3 cysteine pairs are disulfide-bonded: Cys-186-Cys-196, Cys-190-Cys-209, and Cys-211-Cys-220. A helical membrane pass occupies residues 234 to 254 (LSTLLLCLSNLMFLPPVVLAI). The Cytoplasmic segment spans residues 255–257 (RSR). A helical transmembrane segment spans residues 258 to 277 (YVLEAAVYTFTMFFSTFYHA). The Extracellular segment spans residues 278–292 (CDQPGIVVFCIMDYD). A helical membrane pass occupies residues 293-313 (VLQFCDFLGSLMSVWVTVIAM). Residues 314–315 (AR) lie on the Cytoplasmic side of the membrane. The helical transmembrane segment at 316-336 (LQPVVKQVLYLLGAMLLSMAL) threads the bilayer. At 337-342 (QLDRHG) the chain is on the extracellular side. A helical transmembrane segment spans residues 343-363 (LWNLLGPSLFALGILATAWTV). Residues 364–379 (RSVRRRHCYPPTWRRW) are Cytoplasmic-facing. A helical membrane pass occupies residues 380 to 400 (LFYLCPGSLIAGSAVLLYAFV). The Extracellular segment spans residues 401–405 (ETRDN). Residues 406–426 (YFYIHSIWHMLIAGSVGFLLP) form a helical membrane-spanning segment. Over 427 to 472 (PRAKTDHGVPSGARARGCGYQLCINEQEELGLVGPGGATVSSICAS) the chain is Cytoplasmic.

It belongs to the TMEM8 family. Isoform 2 (via its cytoplasmic part) interacts with EZR. Post-translationally, isoform 2 is N-glycosylated.

The protein resides in the cell membrane. Its subcellular location is the cytoplasm. The protein localises to the nucleus. It is found in the mitochondrion. It localises to the endoplasmic reticulum. May function as a regulator of the EGFR pathway. Probable tumor suppressor which may function in cell growth, proliferation and adhesion. This is Transmembrane protein 8B (TMEM8B) from Homo sapiens (Human).